The sequence spans 87 residues: Small ribosomal subunit protein uS17 (87 aa).

It belongs to the universal ribosomal protein uS17 family. As to quaternary structure, part of the 30S ribosomal subunit.

Its function is as follows. One of the primary rRNA binding proteins, it binds specifically to the 5'-end of 16S ribosomal RNA. The polypeptide is Small ribosomal subunit protein uS17 (Pelotomaculum thermopropionicum (strain DSM 13744 / JCM 10971 / SI)).